Here is a 572-residue protein sequence, read N- to C-terminus: MSHNNFELSPDYKDIDKKDDLNPSIVEKGYVEGVVDDVQPERKSFITKFFDDFKPAISTDEDGSALKRSLKARHMQMIAIGGAIGSGLYVGSGSSLSDGGPASIIINYTLIGIMMFFVVYALGELSVAYPVAGGFNTIATRFIDPAWGFTISWNYFINYFITFPLELTTCAITFRFWTDINSAAWISIFLVIVIIINLFGVRAYGEVEFILSTLKVIATLGFIILAIIINCGGVPTDHRGYIGGSIIKKDPFRHGFKGFCSVFTTAAFSFSGTEFIGLAAAEVDNPQKSLPHAVKQVFWRIAVFYIVSLTLIGLLISPDDPNLMGNGSTSVSPFVLAIQEANIKGLPSVFNAVIIISVVSVTNSSTYAAARTLHGMAGLGHAPKFFKYTDRLGRPLIAMVVVLLFGFFAYINEADKNGNDVSDTVFDWLLALAGLSNFFSWGSICLSHIIFRLAYKRQGRSLRDLGFVSPMGIWGSCIGLFFNILCLMAQFYVSLFPIGGKPNANDFFQGYLAACVAIVFFVGYKIYDRSHVPSLDKLDISTGLRTYENSDEEDETSSGFKHVLKKIYGAFC.

12 helical membrane-spanning segments follow: residues 77–97, 102–122, 145–165, 180–200, 209–229, 259–279, 297–317, 341–361, 392–412, 431–451, 478–498, and 507–527; these read MIAI…SSLS, ASII…VYAL, PAWG…TFPL, INSA…NLFG, FILS…AIII, FCSV…IGLA, VFWR…LLIS, ANIK…VVSV, LGRP…AYIN, ALAG…HIIF, IGLF…LFPI, and FFQG…YKIY.

Belongs to the amino acid-polyamine-organocation (APC) superfamily.

The protein resides in the membrane. This is an uncharacterized protein from Schizosaccharomyces pombe (strain 972 / ATCC 24843) (Fission yeast).